Reading from the N-terminus, the 899-residue chain is MAKKKSKSRSKSSRRVLDALQLAEREINGEFDNSSDNDKRHDARRNGTVVNLLKRSKGDTNSDEDDIDSESFEDEELNSDEALGSDDDYDILNSKFSQTIRDKKENANYQEEEDEGGYTSIDEEDLMPLSQVWDMDEKTAQSNGNDDEDASPQLKLQDTDISSESSSSEESESESEDDEEEEDPFDEISEDEEDIELNTITSKLIDETKSKAPKRLDTYGSGEANEYVLPSANAASGASGKLSLTDMMNVIDDRQVIENANLLKGKSSTYEVPLPQRIQQRHDRKAAYEISRQEVSKWNDIVQQNRRADHLIFPLNKPTEHNHASAFTRTQDVPQTELQEKVDQVLQESNLANPEKDSKFEELSTAKMTPEEMRKRTTEMRLMRELMFREERKARRLKKIKSKTYRKIKKKELMKNRELAAVSSDEDNEDHDIARAKERMTLKHKTNSKWAKDMIKHGMTNDAETREEMEEMLRQGERLKAKMLDRNSDDEEDGRVQTLSDVENEEKENIDSEALKSKLGKTGVMNMAFMKNGEAREREANKETLRQLRAVENGDDIKLFESDEEETNGENIQINKGRRIYTPGSLESNKDMNELNDHTRKENKVDESRSLENRLRAKNSGQSKNARTNAEGAIIVEEESDGEPLQDGQNNQQDEEAKDVNPWLANESDEEHTVKKQSSKVNVIDKDSSKNVKAMNKMEKAELKQKKKKKGKSNDDEDLLLTADDSTRLKIVDPYGGSDDEQGDNVFMFKQQDVIAEAFAGDDVVAEFQEEKKRVIDDEDDKEVDTTLPGWGEWAGAGSKPKNKKRKFIKKVKGVVNKDKRRDKNLQNVIINEKVNKKNLKYQSSAVPFPFENREQYERSLRMPIGQEWTSRASHQELIKPRIMTKPGQVIDPLKAPFK.

Positions 1–14 are enriched in basic residues; it reads MAKKKSKSRSKSSR. Residues 1–197 are disordered; the sequence is MAKKKSKSRS…ISEDEEDIEL (197 aa). S34 and S35 each carry phosphoserine. A compositionally biased stretch (basic and acidic residues) spans 36 to 45; sequence DNDKRHDARR. 2 stretches are compositionally biased toward acidic residues: residues 61-90 and 110-126; these read NSDEDDIDSESFEDEELNSDEALGSDDDYD and QEEEDEGGYTSIDEEDL. S151 is modified (phosphoserine). Over residues 167 to 196 the composition is skewed to acidic residues; the sequence is SSEESESESEDDEEEEDPFDEISEDEEDIE. 260–267 provides a ligand contact to ATP; the sequence is ANLLKGKS. Residues S423, S424, S488, S500, and S562 each carry the phosphoserine modification. Disordered stretches follow at residues 485–509 and 559–721; these read DRNSDDEEDGRVQTLSDVENEEKEN and LFES…DLLL. Basic and acidic residues predominate over residues 588-615; the sequence is SNKDMNELNDHTRKENKVDESRSLENRL. A compositionally biased stretch (polar residues) spans 619 to 628; the sequence is NSGQSKNART. Residue S668 is modified to Phosphoserine. Positions 683 to 704 are enriched in basic and acidic residues; the sequence is VIDKDSSKNVKAMNKMEKAELK. Residue S738 is modified to Phosphoserine. The segment at 776 to 805 is disordered; that stretch reads IDDEDDKEVDTTLPGWGEWAGAGSKPKNKK.

This sequence belongs to the UTP14 family. As to quaternary structure, interacts with snoRNA U3. Interacts with MPP10. Component of the ribosomal small subunit (SSU) processome composed of at least 40 protein subunits and snoRNA U3.

It localises to the nucleus. Its subcellular location is the nucleolus. Involved in nucleolar processing of pre-18S ribosomal RNA. The protein is U3 small nucleolar RNA-associated protein 14 (UTP14) of Saccharomyces cerevisiae (strain ATCC 204508 / S288c) (Baker's yeast).